Consider the following 577-residue polypeptide: Arginine--tRNA ligase (577 aa).

Positions 123-133 (PNVAKEMHVGH) match the 'HIGH' region motif.

This sequence belongs to the class-I aminoacyl-tRNA synthetase family. Monomer.

The protein localises to the cytoplasm. It carries out the reaction tRNA(Arg) + L-arginine + ATP = L-arginyl-tRNA(Arg) + AMP + diphosphate. This is Arginine--tRNA ligase from Cronobacter sakazakii (strain ATCC BAA-894) (Enterobacter sakazakii).